The following is a 337-amino-acid chain: Transcription initiation factor IIB (337 aa).

A TFIIB-type zinc finger spans residues 37–68 (EKAVCPECGSRNLVHDYERAELVCGDCGLVID). Positions 41, 44, 60, and 63 each coordinate Zn(2+). Repeat copies occupy residues 154–237 (SELD…SREL) and 248–329 (DYVP…ELAE).

This sequence belongs to the TFIIB family.

Its function is as follows. Stabilizes TBP binding to an archaeal box-A promoter. Also responsible for recruiting RNA polymerase II to the pre-initiation complex (DNA-TBP-TFIIB). The polypeptide is Transcription initiation factor IIB (Methanosarcina mazei (Methanosarcina frisia)).